The primary structure comprises 389 residues: Probable serine/threonine-protein kinase PBL11 (389 aa).

The N-myristoyl glycine moiety is linked to residue Gly2. Cys4 carries the S-palmitoyl cysteine lipid modification. Residues 68 to 353 enclose the Protein kinase domain; that stretch reads FRPDSVVGEG…NEIVKTMEEL (286 aa). ATP is bound by residues 74–82 and Lys106; that span reads VGEGGFGCV. Tyr151 is subject to Phosphotyrosine. Asp203 (proton acceptor) is an active-site residue. Phosphoserine occurs at positions 207 and 237. A phosphothreonine mark is found at Thr238 and Thr243. Residue Tyr251 is modified to Phosphotyrosine.

It belongs to the protein kinase superfamily. Ser/Thr protein kinase family. In terms of tissue distribution, roots, leaves and stems.

It localises to the cell membrane. The catalysed reaction is L-seryl-[protein] + ATP = O-phospho-L-seryl-[protein] + ADP + H(+). It catalyses the reaction L-threonyl-[protein] + ATP = O-phospho-L-threonyl-[protein] + ADP + H(+). Its function is as follows. May play a role in the regulation of plant growth and development. May be involved in plant defense signaling. The sequence is that of Probable serine/threonine-protein kinase PBL11 from Arabidopsis thaliana (Mouse-ear cress).